Consider the following 255-residue polypeptide: tRNA (guanine-N(1)-)-methyltransferase (255 aa).

Residues Gly-114 and 134-139 (IGDYIL) contribute to the S-adenosyl-L-methionine site.

The protein belongs to the RNA methyltransferase TrmD family. In terms of assembly, homodimer.

The protein localises to the cytoplasm. The catalysed reaction is guanosine(37) in tRNA + S-adenosyl-L-methionine = N(1)-methylguanosine(37) in tRNA + S-adenosyl-L-homocysteine + H(+). Specifically methylates guanosine-37 in various tRNAs. This is tRNA (guanine-N(1)-)-methyltransferase from Blochmanniella pennsylvanica (strain BPEN).